Reading from the N-terminus, the 387-residue chain is uncharacterized protein (387 aa).

The interval 1 to 23 is disordered; sequence MSSLPRNAVARNSKMHKKRDSGV. Residues 98–129 are a coiled coil; it reads KIARDLKKRQEDYEKTKLEVERLKRSEELANK. The interval 146–255 is disordered; it reads ENNTVEPNNE…NKKKKKEKNK (110 aa). 2 stretches are compositionally biased toward low complexity: residues 162 to 175 and 182 to 194; these read EQIT…TTEQ and EQTT…QTAE. The span at 204-213 shows a compositional bias: basic and acidic residues; sequence TVEKSGDQST. The segment covering 214–231 has biased composition (polar residues); the sequence is EKTTQQTAEESVEQSTEQ.

This is an uncharacterized protein from Acanthamoeba polyphaga mimivirus (APMV).